The chain runs to 44 residues: uncharacterized protein (44 aa).

This is an uncharacterized protein from Vaccinia virus (strain Western Reserve) (VACV).